We begin with the raw amino-acid sequence, 197 residues long: Nucleoid occlusion factor SlmA (197 aa).

Positions 7-67 constitute an HTH tetR-type domain; that stretch reads INRREHILQC…GLIDFIEESL (61 aa). The segment at residues 30–49 is a DNA-binding region (H-T-H motif); it reads TTAKLAAEVGVSEAALYRHF.

The protein belongs to the nucleoid occlusion factor SlmA family. As to quaternary structure, homodimer. Interacts with FtsZ.

It localises to the cytoplasm. Its subcellular location is the nucleoid. Its function is as follows. Required for nucleoid occlusion (NO) phenomenon, which prevents Z-ring formation and cell division over the nucleoid. Acts as a DNA-associated cell division inhibitor that binds simultaneously chromosomal DNA and FtsZ, and disrupts the assembly of FtsZ polymers. SlmA-DNA-binding sequences (SBS) are dispersed on non-Ter regions of the chromosome, preventing FtsZ polymerization at these regions. The chain is Nucleoid occlusion factor SlmA from Shewanella sediminis (strain HAW-EB3).